A 342-amino-acid polypeptide reads, in one-letter code: Phosphate acyltransferase (342 aa).

It belongs to the PlsX family. As to quaternary structure, homodimer. Probably interacts with PlsY.

It is found in the cytoplasm. It catalyses the reaction a fatty acyl-[ACP] + phosphate = an acyl phosphate + holo-[ACP]. Its pathway is lipid metabolism; phospholipid metabolism. In terms of biological role, catalyzes the reversible formation of acyl-phosphate (acyl-PO(4)) from acyl-[acyl-carrier-protein] (acyl-ACP). This enzyme utilizes acyl-ACP as fatty acyl donor, but not acyl-CoA. The sequence is that of Phosphate acyltransferase from Shewanella amazonensis (strain ATCC BAA-1098 / SB2B).